A 363-amino-acid polypeptide reads, in one-letter code: Probable F-box protein At4g22165 (363 aa).

The region spanning 7–56 (PNTWSELPLDLLNLVFKRLSLVNFQRAKSVCSTRYSVSRQCVPERQIALL) is the F-box domain.

The polypeptide is Probable F-box protein At4g22165 (Arabidopsis thaliana (Mouse-ear cress)).